We begin with the raw amino-acid sequence, 312 residues long: Isochorismatase (312 aa).

A Carrier domain is found at 229-302 (VFTCENIRKQ…EWQKLLTTRS (74 aa)). S263 carries the post-translational modification O-(pantetheine 4'-phosphoryl)serine.

This sequence belongs to the isochorismatase family.

The enzyme catalyses isochorismate + H2O = (2S,3S)-2,3-dihydroxy-2,3-dihydrobenzoate + pyruvate. Its pathway is siderophore biosynthesis; bacillibactin biosynthesis. The polypeptide is Isochorismatase (dhbB) (Bacillus subtilis (strain 168)).